Consider the following 76-residue polypeptide: Gallerimycin (76 aa).

Residues 1-19 (MKIAFIVAISLAFLAVTSC) form the signal peptide.

The protein belongs to the invertebrate defensin family.

Functionally, has antifungal activity against the entomopathogenic fungus M.nisopliae, but does not display any antifungal activity against S.cerevisiae nor any antimicrobial activity against M.luteus, B.subtilis, and E.coli. This chain is Gallerimycin (LOC113523440), found in Galleria mellonella (Greater wax moth).